The chain runs to 66 residues: UPF0457 protein BA_2525/GBAA_2525/BAS2348 (66 aa).

It belongs to the UPF0457 family.

The sequence is that of UPF0457 protein BA_2525/GBAA_2525/BAS2348 from Bacillus anthracis.